Reading from the N-terminus, the 257-residue chain is Zinc transporter ZupT (257 aa).

The next 5 helical transmembrane spans lie at 5-25 (LILT…AVLG), 32-52 (VLAF…LMEM), 61-81 (GMSP…YFGL), 109-129 (AILL…ATFV), and 137-157 (LGMG…LAVA). Residues N120 and E123 each contribute to the Fe(2+) site. Zn(2+)-binding residues include E123 and H148. N149, E152, and E181 together coordinate Fe(2+). Position 152 (E152) interacts with Zn(2+). The next 3 helical transmembrane spans lie at 182 to 202 (ILGG…VVMA), 203 to 223 (AVMA…LMPL), and 236 to 256 (GVLC…TAGI).

It belongs to the ZIP transporter (TC 2.A.5) family. ZupT subfamily.

It is found in the cell inner membrane. The enzyme catalyses Zn(2+)(in) = Zn(2+)(out). Mediates zinc uptake. May also transport other divalent cations. The sequence is that of Zinc transporter ZupT from Escherichia fergusonii (strain ATCC 35469 / DSM 13698 / CCUG 18766 / IAM 14443 / JCM 21226 / LMG 7866 / NBRC 102419 / NCTC 12128 / CDC 0568-73).